Here is a 260-residue protein sequence, read N- to C-terminus: Protein TONNEAU 1a (260 aa).

The region spanning 73 to 105 is the LisH domain; sequence SGRLLSALICEYLDWAQLNHTLIVYQPESNLPK. 2 disordered regions span residues 147–224 and 236–260; these read TQGM…EEVT and DRKT…EGRD. Over residues 161 to 175 the composition is skewed to low complexity; the sequence is ESSSSLESRNPPRRS. Basic and acidic residues predominate over residues 248 to 260; the sequence is NVRDGTNEEEGRD.

Interacts with CEN1, LNG1/TRM2 and LNG2/TRM1 (via C-terminus).

The protein localises to the cytoplasm. It is found in the cytoskeleton. Functionally, involved in the control of the dynamic organization of the cortical cytoskeleton. May play a role in the organization of microtubule arrays at the centrosome through interaction with centrin 1 (CEN1). The protein is Protein TONNEAU 1a (TON1A) of Arabidopsis thaliana (Mouse-ear cress).